The primary structure comprises 54 residues: Large ribosomal subunit protein bL33B (54 aa).

This sequence belongs to the bacterial ribosomal protein bL33 family.

This is Large ribosomal subunit protein bL33B from Mycolicibacterium vanbaalenii (strain DSM 7251 / JCM 13017 / BCRC 16820 / KCTC 9966 / NRRL B-24157 / PYR-1) (Mycobacterium vanbaalenii).